The sequence spans 737 residues: Glycogen [starch] synthase, muscle (737 aa).

Serine 8 is modified (phosphoserine; by AMPK and PKA). Serine 11 carries the post-translational modification Phosphoserine. Lysine 39 is a UDP binding site. Histidine 205 and arginine 211 together coordinate UDP-alpha-D-glucose. Alpha-D-glucose 6-phosphate is bound by residues histidine 291, glutamate 292, glutamine 294, histidine 297, and lysine 301. Arginine 331 provides a ligand contact to UDP. Arginine 331 contributes to the UDP-alpha-D-glucose binding site. Phosphoserine is present on serine 412. Histidine 501 contributes to the alpha-D-glucose 6-phosphate binding site. 3 residues coordinate UDP-alpha-D-glucose: glutamate 510, tryptophan 512, and glycine 513. UDP is bound at residue threonine 515. Positions 582 and 586 each coordinate alpha-D-glucose 6-phosphate. Residues 634–737 (YRYPRPASVP…PTSSLGEERN (104 aa)) are disordered. Serine 641 is modified (phosphoserine; by DYRK2, GSK3-alpha, GSK3-beta and PASK). 2 positions are modified to phosphoserine; by GSK3-alpha and GSK3-beta: serine 645 and serine 649. Phosphoserine is present on serine 652. A Phosphoserine; by GSK3-alpha and GSK3-beta modification is found at serine 653. At serine 657 the chain carries Phosphoserine; by CK2. The span at 658 to 681 (EDEEDPRNGPLEEDSERYDEDEEA) shows a compositional bias: acidic residues. A Phosphoserine modification is found at serine 672. Positions 682–695 (AKDRRNIRAPEWPR) are enriched in basic and acidic residues. Phosphoserine is present on serine 698. Residues 698-714 (SCTSSTSGSKRNSVDTA) show a composition bias toward polar residues. The residue at position 700 (threonine 700) is a Phosphothreonine. Serine 710 bears the Phosphoserine mark. The span at 715-737 (TSSSLSTPSEPLSPTSSLGEERN) shows a compositional bias: low complexity. Threonine 721 is modified (phosphothreonine). Phosphoserine is present on residues serine 727 and serine 731.

Belongs to the glycosyltransferase 3 family. As to quaternary structure, part of the GYS1-GYG1 complex, a heterooctamer composed of a tetramer of GYS1 and 2 dimers of GYG1, where each GYS1 protomer binds to one GYG1 subunit (via GYG1 C-terminus); the GYS1 tetramer may dissociate from GYG1 dimers to continue glycogen polymerization on its own. Post-translationally, phosphorylation at Ser-8 by AMPK inactivates the enzyme activity. Primed phosphorylation at Ser-657 (site 5) by CSNK2A1 and CSNK2A2 is required for inhibitory phosphorylation at Ser-641 (site 3a), Ser-645 (site 3b), Ser-649 (site 3c) and Ser-653 (site 4) by GSK3A an GSK3B. Phosphorylated at Ser-641 by PASK, leading to inactivation; phosphorylation by PASK is inhibited by glycogen. Phosphorylated at Ser-641 by DYRK2, leading to inactivation. Dephosphorylation at Ser-641 and Ser-645 by PP1 activates the enzyme.

It carries out the reaction [(1-&gt;4)-alpha-D-glucosyl](n) + UDP-alpha-D-glucose = [(1-&gt;4)-alpha-D-glucosyl](n+1) + UDP + H(+). It participates in glycan biosynthesis; glycogen biosynthesis. Allosteric activation by glucose-6-phosphate. Phosphorylation reduces the activity towards UDP-glucose. When in the non-phosphorylated state, glycogen synthase does not require glucose-6-phosphate as an allosteric activator; when phosphorylated it does. Glycogen synthase participates in the glycogen biosynthetic process along with glycogenin and glycogen branching enzyme. Extends the primer composed of a few glucose units formed by glycogenin by adding new glucose units to it. In this context, glycogen synthase transfers the glycosyl residue from UDP-Glc to the non-reducing end of alpha-1,4-glucan. The protein is Glycogen [starch] synthase, muscle (GYS1) of Macaca mulatta (Rhesus macaque).